Consider the following 465-residue polypeptide: ATP synthase subunit beta (465 aa).

Residue 149–156 (GGAGVGKT) participates in ATP binding.

This sequence belongs to the ATPase alpha/beta chains family. F-type ATPases have 2 components, CF(1) - the catalytic core - and CF(0) - the membrane proton channel. CF(1) has five subunits: alpha(3), beta(3), gamma(1), delta(1), epsilon(1). CF(0) has three main subunits: a(1), b(2) and c(9-12). The alpha and beta chains form an alternating ring which encloses part of the gamma chain. CF(1) is attached to CF(0) by a central stalk formed by the gamma and epsilon chains, while a peripheral stalk is formed by the delta and b chains.

Its subcellular location is the cell inner membrane. It catalyses the reaction ATP + H2O + 4 H(+)(in) = ADP + phosphate + 5 H(+)(out). In terms of biological role, produces ATP from ADP in the presence of a proton gradient across the membrane. The catalytic sites are hosted primarily by the beta subunits. The polypeptide is ATP synthase subunit beta (Dictyoglomus turgidum (strain DSM 6724 / Z-1310)).